The sequence spans 343 residues: MKHSIDSLQKEIESFAITSNETLEEFKLTYLVRKGSIANLFKQLKDVSPDERRAVGQLLNTLKTTAEKKYEDAKDTLASSAASEKNNIIDLTLPGRTHFLGSEHPVQKVLGDMKQIFTAMGFAIETGPELECGVYNFDKLNFPPDHPARDMQDTFFIKLDEKDGNDVLLRTHTSPVQIRVMLDQRPPIRVICPGKVYRNEAISSRSYCVFHQLEGLYIDKNVSFADLKATIYSFAKQMFGQDVQLRFRPSFFPFTEPSAEVDVTCYLCNGKGCKVCKQSGWLEILGCGMVHPNVLCQCGIDPEEYSGYAFGMGVDRTALLRYKIDDIRLLFENDIRMLDQFMQ.

Glutamate 256 provides a ligand contact to Mg(2+).

The protein belongs to the class-II aminoacyl-tRNA synthetase family. Phe-tRNA synthetase alpha subunit type 1 subfamily. In terms of assembly, tetramer of two alpha and two beta subunits. Mg(2+) serves as cofactor.

It localises to the cytoplasm. The catalysed reaction is tRNA(Phe) + L-phenylalanine + ATP = L-phenylalanyl-tRNA(Phe) + AMP + diphosphate + H(+). This chain is Phenylalanine--tRNA ligase alpha subunit, found in Prosthecochloris aestuarii (strain DSM 271 / SK 413).